A 160-amino-acid chain; its full sequence is 6,7-dimethyl-8-ribityllumazine synthase (160 aa).

Residues Trp-27, 59–61 (AIE), and 81–83 (VVI) contribute to the 5-amino-6-(D-ribitylamino)uracil site. 86–87 (QT) contributes to the (2S)-2-hydroxy-3-oxobutyl phosphate binding site. His-89 (proton donor) is an active-site residue. Residue Asn-114 coordinates 5-amino-6-(D-ribitylamino)uracil. Arg-128 is a binding site for (2S)-2-hydroxy-3-oxobutyl phosphate.

Belongs to the DMRL synthase family. As to quaternary structure, homopentamer.

The enzyme catalyses (2S)-2-hydroxy-3-oxobutyl phosphate + 5-amino-6-(D-ribitylamino)uracil = 6,7-dimethyl-8-(1-D-ribityl)lumazine + phosphate + 2 H2O + H(+). Its pathway is cofactor biosynthesis; riboflavin biosynthesis; riboflavin from 2-hydroxy-3-oxobutyl phosphate and 5-amino-6-(D-ribitylamino)uracil: step 1/2. Functionally, catalyzes the formation of 6,7-dimethyl-8-ribityllumazine by condensation of 5-amino-6-(D-ribitylamino)uracil with 3,4-dihydroxy-2-butanone 4-phosphate. This is the penultimate step in the biosynthesis of riboflavin. This Mycobacterium tuberculosis (strain CDC 1551 / Oshkosh) protein is 6,7-dimethyl-8-ribityllumazine synthase (ribH).